The sequence spans 180 residues: Endothelin-2 (180 aa).

Positions 1–26 (MVALPTAWCSVALALLVALHEGKSQS) are cleaved as a signal peptide. A propeptide spanning residues 27 to 47 (AATSEEPPAPSARARGSHLRL) is cleaved from the precursor. Cystine bridges form between Cys-50–Cys-64 and Cys-52–Cys-60. A propeptide spanning residues 71 to 180 (VNTPGQTAPY…ESSHSRWRKR (110 aa)) is cleaved from the precursor. Residues 97 to 112 (CECYSTRDSACVTFCH) are endothelin-like. Positions 157 to 180 (NFTRHQQQKATREPESSHSRWRKR) are disordered.

Belongs to the endothelin/sarafotoxin family.

The protein localises to the secreted. Endothelins are endothelium-derived vasoconstrictor peptides. In Atelerix albiventris (Middle-African hedgehog), this protein is Endothelin-2 (EDN2).